The following is a 413-amino-acid chain: MAVVCSKADWFVTSCSTTLVAVNLKQSREPFVFDCSKAEKKPKEADVDNKSAGEGSEEKDSDSILAFAISASGKHVALTDDHKRLVLFCTEPSWKCISTRWVVRRCTSLAFTQAEDELYVADKSGDVYSFSILEPHKAGELKLGHLSMLLDVALSPDDKYIITADRDEKIRVSFRRSPYNIQAFCLGHTEFVSSLLVPAGHPDWLLSGSGDGTVNVWHYETGRRLHSVDMRKFGLDSENTEKRFAVSRIISSPDGQHVAVQCEGFPSVQLFTVDCGTEGLLKPADTLTLPLSPWDVTFDSENQLWVLLESEDMKVLLYRHSEQHWRLCDSESPELKKVTNALQTQWHLFKGSVGLESQFKHLYKVNFDNMASYLQKKQERLDLEHKKRAAAANGSKPNKKSKTESGAVPQSTS.

WD repeat units follow at residues 101–140, 144–183, 187–227, and 286–328; these read WVVR…KAGE, GHLS…NIQA, GHTE…RLHS, and TLTL…WRLC. Positions 386–413 are disordered; the sequence is KKRAAAANGSKPNKKSKTESGAVPQSTS.

It belongs to the WD repeat TRM82 family. In terms of assembly, non-catalytic component of the METTL1-WDR4 complex, composed of mettl1 and wdr4.

It is found in the nucleus. It participates in tRNA modification; N(7)-methylguanine-tRNA biosynthesis. In terms of biological role, non-catalytic component of the METTL1-WDR4 methyltransferase complex required for the formation of N(7)-methylguanine in a subset of RNA species, such as tRNAs, mRNAs and microRNAs (miRNAs). In the METTL1-WDR4 methyltransferase complex, wdr4 acts as a scaffold for tRNA-binding. Required for the formation of N(7)-methylguanine at position 46 (m7G46) in a large subset of tRNAs that contain the 5'-RAGGU-3' motif within the variable loop. M7G46 interacts with C13-G22 in the D-loop to stabilize tRNA tertiary structure and protect tRNAs from decay. Also required for the formation of N(7)-methylguanine at internal sites in a subset of mRNAs. Also required for methylation of a specific subset of miRNAs. The polypeptide is tRNA (guanine-N(7)-)-methyltransferase non-catalytic subunit wdr4 (wdr4) (Danio rerio (Zebrafish)).